The chain runs to 539 residues: O-phosphoserine--tRNA(Cys) ligase (539 aa).

Substrate is bound by residues H188–T190, S233–S235, Y275–Y276, and N327.

The protein belongs to the class-II aminoacyl-tRNA synthetase family. O-phosphoseryl-tRNA(Cys) synthetase subfamily. As to quaternary structure, homotetramer. Interacts with SepCysS.

It catalyses the reaction tRNA(Cys) + O-phospho-L-serine + ATP = O-phospho-L-seryl-tRNA(Cys) + AMP + diphosphate. Functionally, catalyzes the attachment of O-phosphoserine (Sep) to tRNA(Cys). The sequence is that of O-phosphoserine--tRNA(Cys) ligase from Methanococcoides burtonii (strain DSM 6242 / NBRC 107633 / OCM 468 / ACE-M).